A 643-amino-acid chain; its full sequence is Protein disulfide-isomerase A4 (643 aa).

The signal sequence occupies residues 1 to 20 (MKLRKAWLLVLLLALTQLLA). Thioredoxin domains follow at residues 21–167 (AASA…EVSQ) and 167–299 (QPDW…EFLK). The interval 24–58 (AEDAHEDASDSENPIEDDDDEEEDEEDEDDLEVKE) is disordered. The segment covering 32–56 (SDSENPIEDDDDEEEDEEDEDDLEV) has biased composition (acidic residues). Residues 89–92 (CGHC) carry the CXXC motif. Cystine bridges form between Cys89-Cys92 and Cys204-Cys207. An N6-acetyllysine modification is found at Lys364. In terms of domain architecture, Thioredoxin 3 spans 503–634 (FKKGKLKPVI…LSKFIDEHAT (132 aa)). The CXXC motif lies at 553–556 (CGHC). A disulfide bridge links Cys553 with Cys556. Positions 640–643 (KEEL) match the Prevents secretion from ER motif.

Belongs to the protein disulfide isomerase family. In terms of assembly, part of a large chaperone multiprotein complex comprising DNAJB11, HSP90B1, HSPA5, HYOU, PDIA2, PDIA4, PDIA6, PPIB, SDF2L1, UGGT1 and very small amounts of ERP29, but not, or at very low levels, CALR nor CANX. Component of a complex containing at least CRELD2, MANF, MATN3 and PDIA4. In terms of processing, O-glycosylated.

It is found in the endoplasmic reticulum lumen. It localises to the melanosome. The enzyme catalyses Catalyzes the rearrangement of -S-S- bonds in proteins.. This Rattus norvegicus (Rat) protein is Protein disulfide-isomerase A4 (Pdia4).